A 118-amino-acid polypeptide reads, in one-letter code: Small ribosomal subunit protein uS13 (118 aa).

The tract at residues 92–118 (RRGLPVRGQRTKTNARTRKGPRKPIKK) is disordered.

The protein belongs to the universal ribosomal protein uS13 family. Part of the 30S ribosomal subunit. Forms a loose heterodimer with protein S19. Forms two bridges to the 50S subunit in the 70S ribosome.

Located at the top of the head of the 30S subunit, it contacts several helices of the 16S rRNA. In the 70S ribosome it contacts the 23S rRNA (bridge B1a) and protein L5 of the 50S subunit (bridge B1b), connecting the 2 subunits; these bridges are implicated in subunit movement. Contacts the tRNAs in the A and P-sites. In Yersinia enterocolitica serotype O:8 / biotype 1B (strain NCTC 13174 / 8081), this protein is Small ribosomal subunit protein uS13.